The primary structure comprises 711 residues: Pentatricopeptide repeat-containing protein At5g46580, chloroplastic (711 aa).

Residues 1–43 (MATVLTTAIDVCFNPQNSDTKKHSLFLKPSLFRQSRSRKLNIS) constitute a chloroplast transit peptide. 10 PPR repeats span residues 185–219 (ETIFYNVTMKSLRFGRQFQLIEEMALEMVKDGVEL), 220–254 (DNITYSTIITCAKRCNLYNKAIEWFERMYKTGLMP), 255–289 (DEVTYSAILDVYSKSGKVEEVLSLYERAVATGWKP), 290–324 (DAIAFSVLGKMFGEAGDYDGIRYVLQEMKSMDVKP), 325–359 (NVVVYNTLLEAMGRAGKPGLARSLFNEMLEAGLTP), 360–394 (NEKTLTALVKIYGKARWARDALQLWEEMKAKKWPM), 395–425 (DFILYNTLLNMCADIGLEEEAERLFNDMKES), 431–465 (DNFSYTAMLNIYGSGGKAEKAMELFEEMLKAGVQV), 466–500 (NVMGCTCLVQCLGKAKRIDDVVYVFDLSIKRGVKP), and 501–535 (DDRLCGCLLSVMALCESSEDAEKVMACLERANKKL). Residues 614 to 696 (LDVRSLSVGA…IFVATKEDLV (83 aa)) enclose the Smr domain.

Belongs to the PPR family. P subfamily.

The protein localises to the plastid. It is found in the chloroplast. The sequence is that of Pentatricopeptide repeat-containing protein At5g46580, chloroplastic from Arabidopsis thaliana (Mouse-ear cress).